We begin with the raw amino-acid sequence, 385 residues long: MNKTKMDSKVLDSILMKMLKTVDGSKDEVFQIGEQSRQQYEQLVEELKQIKQQVYEVIELGDKLEVQTRHARNRLSEVSRNFHRFSEEEIRNAYEKAHKLQVELTMIQQREKQLRERRDDLERRLLGLQEIIERSESLVSQITVVLNYLNQDLREVGLLLADAQAKQDFGLRIIEAQEEERKRVSREIHDGPAQMLANVMMRSELIERIFRDRGAEDGFQEIKNLRQNVRNALYEVRRIIYDLRPMALDDLGLIPTLRKYLYTTEEYNGKVKIHFQCIGETEDQRLAPQFEVALFRLAQEAVSNALKHSESEEITVKVEITKDFVILMIKDNGKGFDLKEAKEKKNKSFGLLGMKERVDLLEGTMTIDSKIGLGTFIMIKVPLSL.

A coiled-coil region spans residues 31–141; the sequence is QIGEQSRQQY…IERSESLVSQ (111 aa). The residue at position 76 (Ser76) is a Phosphoserine. A Histidine kinase domain is found at 183–385; sequence RVSREIHDGP…FIMIKVPLSL (203 aa). Position 189 is a phosphohistidine; by autocatalysis (His189).

In terms of processing, autophosphorylated. Phosphorylated in vitro at Ser-76 by the serine/threonine-protein kinase YbdM, which stimulates the phosphate transfer to DegU.

The protein localises to the cytoplasm. The enzyme catalyses ATP + protein L-histidine = ADP + protein N-phospho-L-histidine.. Its activity is regulated as follows. Regulated via serine phosphorylation of its input domain. Phosphotransfer from DegS to DegU is stimulated by phosphorylation on Ser-76 and by DegQ. In terms of biological role, member of the two-component regulatory system DegS/DegU, which plays an important role in the transition growth phase. Involved in the control of expression of different cellular functions, including production of degradative enzymes such as the neutral and alkaline proteases, flagellum formation and biofilm formation. Acts both as a protein kinase that undergoes autophosphorylation and subsequently transfers the phosphate to DegU, and as a protein phosphatase that dephosphorylates phospho-DegU. The polypeptide is Signal transduction histidine-protein kinase/phosphatase DegS (degS) (Bacillus subtilis (strain 168)).